We begin with the raw amino-acid sequence, 73 residues long: Hypotensin-like peptide (73 aa).

A signal peptide spans 1 to 25; the sequence is MKMMIAIVFVSILLLMFSLSSTAMG.

In terms of tissue distribution, expressed by the venom gland.

Its subcellular location is the secreted. Its function is as follows. May potentiate the hypotensive effect of bradykinin. This chain is Hypotensin-like peptide, found in Tityus serrulatus (Brazilian scorpion).